Reading from the N-terminus, the 196-residue chain is DnaA initiator-associating protein DiaA (196 aa).

Residues 34-196 (VVQSLLNGNK…DNTLFPHQEV (163 aa)) enclose the SIS domain.

Belongs to the SIS family. DiaA subfamily. In terms of assembly, homotetramer; dimer of dimers.

In terms of biological role, required for the timely initiation of chromosomal replication via direct interactions with the DnaA initiator protein. This chain is DnaA initiator-associating protein DiaA, found in Erwinia tasmaniensis (strain DSM 17950 / CFBP 7177 / CIP 109463 / NCPPB 4357 / Et1/99).